Reading from the N-terminus, the 163-residue chain is Cyanate hydratase (163 aa).

Active-site residues include Arg103, Glu106, and Ser129.

Belongs to the cyanase family.

It catalyses the reaction cyanate + hydrogencarbonate + 3 H(+) = NH4(+) + 2 CO2. Its function is as follows. Catalyzes the reaction of cyanate with bicarbonate to produce ammonia and carbon dioxide. The protein is Cyanate hydratase of Paracoccidioides brasiliensis (strain Pb18).